We begin with the raw amino-acid sequence, 337 residues long: 5-formaminoimidazole-4-carboxamide-1-(beta)-D-ribofuranosyl 5'-monophosphate synthetase (337 aa).

H23 and S87 together coordinate 5-amino-1-(5-phospho-beta-D-ribosyl)imidazole-4-carboxamide. One can recognise an ATP-grasp domain in the interval 121–328; that stretch reads MRLLEYAGIP…IAHEIVNAVK (208 aa). Residues 144–191 and E213 contribute to the ATP site; that span reads PVIV…VPAY. Position 233 (N233) interacts with 5-amino-1-(5-phospho-beta-D-ribosyl)imidazole-4-carboxamide. Residues E272 and E285 each contribute to the Mg(2+) site.

This sequence belongs to the phosphohexose mutase family. The cofactor is Mg(2+). Mn(2+) is required as a cofactor.

The catalysed reaction is 5-amino-1-(5-phospho-beta-D-ribosyl)imidazole-4-carboxamide + formate + ATP = 5-formamido-1-(5-phospho-D-ribosyl)imidazole-4-carboxamide + ADP + phosphate. It functions in the pathway purine metabolism; IMP biosynthesis via de novo pathway; 5-formamido-1-(5-phospho-D-ribosyl)imidazole-4-carboxamide from 5-amino-1-(5-phospho-D-ribosyl)imidazole-4-carboxamide (formate route): step 1/1. In terms of biological role, catalyzes the ATP- and formate-dependent formylation of 5-aminoimidazole-4-carboxamide-1-beta-d-ribofuranosyl 5'-monophosphate (AICAR) to 5-formaminoimidazole-4-carboxamide-1-beta-d-ribofuranosyl 5'-monophosphate (FAICAR) in the absence of folates. The chain is 5-formaminoimidazole-4-carboxamide-1-(beta)-D-ribofuranosyl 5'-monophosphate synthetase from Caldivirga maquilingensis (strain ATCC 700844 / DSM 13496 / JCM 10307 / IC-167).